A 754-amino-acid chain; its full sequence is Protein tyrosine phosphatase domain-containing protein 1 (754 aa).

The 172-residue stretch at 82 to 253 folds into the Tyrosine-protein phosphatase domain; sequence YSSWVTDNIL…LTPLRNIFSC (172 aa). Cys-190 functions as the Phosphocysteine intermediate in the catalytic mechanism. 2 positions are modified to phosphoserine: Ser-392 and Ser-394. Residues 487–498 are compositionally biased toward polar residues; sequence SGAFSADVSGSH. A disordered region spans residues 487–554; that stretch reads SGAFSADVSG…PRSPLDCGSS (68 aa). A Phosphoserine modification is found at Ser-547.

It belongs to the protein-tyrosine phosphatase family. Non-receptor class PTPDC1 subfamily.

Its function is as follows. May play roles in cilia formation and/or maintenance. This is Protein tyrosine phosphatase domain-containing protein 1 (PTPDC1) from Homo sapiens (Human).